A 215-amino-acid chain; its full sequence is dITP/XTP pyrophosphatase (215 aa).

13–18 (THNTGK) is a binding site for substrate. Catalysis depends on D74, which acts as the Proton acceptor. D74 is a binding site for Mg(2+). Substrate contacts are provided by residues S75, 163–166 (FGFD), K186, and 199–200 (HR).

This sequence belongs to the HAM1 NTPase family. In terms of assembly, homodimer. Requires Mg(2+) as cofactor.

The enzyme catalyses XTP + H2O = XMP + diphosphate + H(+). It carries out the reaction dITP + H2O = dIMP + diphosphate + H(+). The catalysed reaction is ITP + H2O = IMP + diphosphate + H(+). Functionally, pyrophosphatase that catalyzes the hydrolysis of nucleoside triphosphates to their monophosphate derivatives, with a high preference for the non-canonical purine nucleotides XTP (xanthosine triphosphate), dITP (deoxyinosine triphosphate) and ITP. Seems to function as a house-cleaning enzyme that removes non-canonical purine nucleotides from the nucleotide pool, thus preventing their incorporation into DNA/RNA and avoiding chromosomal lesions. The chain is dITP/XTP pyrophosphatase from Bartonella quintana (strain Toulouse) (Rochalimaea quintana).